The chain runs to 302 residues: Homoserine kinase (302 aa).

92–102 (PLARGLGSSAT) is a binding site for ATP.

The protein belongs to the GHMP kinase family. Homoserine kinase subfamily.

The protein localises to the cytoplasm. The enzyme catalyses L-homoserine + ATP = O-phospho-L-homoserine + ADP + H(+). It functions in the pathway amino-acid biosynthesis; L-threonine biosynthesis; L-threonine from L-aspartate: step 4/5. Functionally, catalyzes the ATP-dependent phosphorylation of L-homoserine to L-homoserine phosphate. The chain is Homoserine kinase from Trichormus variabilis (strain ATCC 29413 / PCC 7937) (Anabaena variabilis).